A 453-amino-acid polypeptide reads, in one-letter code: MSLIHPIQAVVSNRSGELIFAVLKNVIIAYRYDQTNGKYLEMGKWEDQFSRDEMIKIAVVKEQARQLAENEEKGIKKSKTNEGNTIEKKHDAKIPVPGPGAPPIYSQIRNLMISNDETMLLACADSDKSVLVFKIETLNNDNCLKLIKRQPFPKRPNAITITEDDKTVIIADKFGDVYSMLIESPVIENIDEEFEPILGHVSMLTGVLSTTNNGMKFVMTSDRDEHIKISHFPQSYIVDKWLFGHKEFVSSICIPSWNSNILVSAGGDHGIFLWDWIKGEKLDEFDFTDLVLPYINENHLAPDRFQNEENDLKEFAVSKLVSLPNNPYFAFFVEATKLLIILEVDQSTYKMKLLQKIVLPYYITFISTFSDDKTMGFNISLDNRESGDKDFVKFIALDTTSNTFSIKEEQSDEFNTSIVNSFSKEDSIVKVELDEVYPLYNIISLKKHGEHYS.

Residues 69–99 (ENEEKGIKKSKTNEGNTIEKKHDAKIPVPGP) form a disordered region. 2 WD repeats span residues 103 to 143 (PIYS…NDNC) and 244 to 286 (GHKE…DEFD).

The protein belongs to the WD repeat TRM82 family. In terms of assembly, forms a heterodimer with the catalytic subunit TRM8.

It localises to the nucleus. Its pathway is tRNA modification; N(7)-methylguanine-tRNA biosynthesis. Required for the formation of N(7)-methylguanine at position 46 (m7G46) in tRNA. In the complex, it is required to stabilize and induce conformational changes of the catalytic subunit. The protein is tRNA (guanine-N(7)-)-methyltransferase non-catalytic subunit TRM82 of Vanderwaltozyma polyspora (strain ATCC 22028 / DSM 70294 / BCRC 21397 / CBS 2163 / NBRC 10782 / NRRL Y-8283 / UCD 57-17) (Kluyveromyces polysporus).